A 61-amino-acid chain; its full sequence is Large ribosomal subunit protein uL30 (61 aa).

The protein belongs to the universal ribosomal protein uL30 family. Part of the 50S ribosomal subunit.

This chain is Large ribosomal subunit protein uL30, found in Corynebacterium efficiens (strain DSM 44549 / YS-314 / AJ 12310 / JCM 11189 / NBRC 100395).